The primary structure comprises 154 residues: 17 kDa surface antigen (154 aa).

Positions 1 to 19 (MKLLSKIMVIALATSMLQA) are cleaved as a signal peptide. Cys20 carries N-palmitoyl cysteine lipidation. A lipid anchor (S-diacylglycerol cysteine) is attached at Cys20.

It belongs to the rickettsiale 17 kDa surface antigen family.

The protein localises to the cell outer membrane. The chain is 17 kDa surface antigen (omp) from Rickettsia parkeri.